The primary structure comprises 577 residues: Arginine--tRNA ligase (577 aa).

Residues proline 122–histidine 132 carry the 'HIGH' region motif.

Belongs to the class-I aminoacyl-tRNA synthetase family. As to quaternary structure, monomer.

Its subcellular location is the cytoplasm. It catalyses the reaction tRNA(Arg) + L-arginine + ATP = L-arginyl-tRNA(Arg) + AMP + diphosphate. The chain is Arginine--tRNA ligase from Histophilus somni (strain 129Pt) (Haemophilus somnus).